A 269-amino-acid chain; its full sequence is 4-hydroxy-tetrahydrodipicolinate reductase (269 aa).

Residues 9–14 and E35 each bind NAD(+); that span reads GAGGRM. R36 serves as a coordination point for NADP(+). Residues 98–100 and 122–125 contribute to the NAD(+) site; these read GTT and ASNY. H155 serves as the catalytic Proton donor/acceptor. H156 is a binding site for (S)-2,3,4,5-tetrahydrodipicolinate. K159 (proton donor) is an active-site residue. 165–166 contributes to the (S)-2,3,4,5-tetrahydrodipicolinate binding site; it reads GT.

Belongs to the DapB family.

It localises to the cytoplasm. It catalyses the reaction (S)-2,3,4,5-tetrahydrodipicolinate + NAD(+) + H2O = (2S,4S)-4-hydroxy-2,3,4,5-tetrahydrodipicolinate + NADH + H(+). The catalysed reaction is (S)-2,3,4,5-tetrahydrodipicolinate + NADP(+) + H2O = (2S,4S)-4-hydroxy-2,3,4,5-tetrahydrodipicolinate + NADPH + H(+). It functions in the pathway amino-acid biosynthesis; L-lysine biosynthesis via DAP pathway; (S)-tetrahydrodipicolinate from L-aspartate: step 4/4. In terms of biological role, catalyzes the conversion of 4-hydroxy-tetrahydrodipicolinate (HTPA) to tetrahydrodipicolinate. This is 4-hydroxy-tetrahydrodipicolinate reductase from Actinobacillus pleuropneumoniae serotype 7 (strain AP76).